The chain runs to 425 residues: Tol-Pal system protein TolB (425 aa).

The signal sequence occupies residues 1 to 23; that stretch reads MQMMKKRILLCLLVGMTCLPVLA.

The protein belongs to the TolB family. The Tol-Pal system is composed of five core proteins: the inner membrane proteins TolA, TolQ and TolR, the periplasmic protein TolB and the outer membrane protein Pal. They form a network linking the inner and outer membranes and the peptidoglycan layer.

It is found in the periplasm. Functionally, part of the Tol-Pal system, which plays a role in outer membrane invagination during cell division and is important for maintaining outer membrane integrity. In Albidiferax ferrireducens (strain ATCC BAA-621 / DSM 15236 / T118) (Rhodoferax ferrireducens), this protein is Tol-Pal system protein TolB.